A 390-amino-acid chain; its full sequence is Homeobox protein Meis1 (390 aa).

Positions 108–191 (GGDVCSSESF…PIDLVIDDRD (84 aa)) constitute an MEIS N-terminal domain. Residues 188–202 (DDRDGGSKSDSEDLT) show a composition bias toward basic and acidic residues. Positions 188 to 279 (DDRDGGSKSD…KKRNKGRGIF (92 aa)) are disordered. Residues 272 to 334 (RNKGRGIFPK…NARRRIVQPM (63 aa)) constitute a DNA-binding region (homeobox; TALE-type). Residues 299-329 (YPSEEQKKQLAQDTGLTILQVNNWFINARRR) are interaction with DNA.

It belongs to the TALE/MEIS homeobox family. In terms of assembly, interacts with pbx1 isoform b. In terms of tissue distribution, in the embryo, displays a broad expression pattern with high levels observed in tissues of neural cell fate such as midbrain, hindbrain, dorsal portion of the neural tube, and neural crest-derived branchial arches. Widely expressed in the adult with highest levels in brain and spleen.

Its subcellular location is the cytoplasm. The protein resides in the nucleus. Functionally, induces expression of a number of neural crest marker genes as part of a heterodimer with isoform b of pbx1, to specify neural crest cell fate. Binds to a highly conserved region in the promoter of the neural crest marker gene zic3. This is Homeobox protein Meis1 (meis1) from Xenopus laevis (African clawed frog).